A 408-amino-acid chain; its full sequence is CinA-like protein (408 aa).

This sequence belongs to the CinA family.

In Thermotoga neapolitana (strain ATCC 49049 / DSM 4359 / NBRC 107923 / NS-E), this protein is CinA-like protein.